The following is a 409-amino-acid chain: MIALPDTDSEDELPPGWEERATDDGTVCYVNQQGKTSQWTHPRTGRSKRITGELPLGWEKYYDEQGKRFMFLNKETQQRTNVDPRLAFAVEEPTQNVAQVRQRFDSCSTALQVLHGKDLHGRTALITGANCGIGYETARSLAHHGCEIIFACRNRSSAEAAIERIAQERPAARSRCRFAALDLSSLRSVQRFVEEIKQSVSHIDYLILNAGVFALPYTRTVDGLETTFQVSHLSHFYLTLQLETLFDYKTRIIVLSSESHRFANLPVENLAVHHLSPPPEKYWSMMAYNNAKLCNVLFAQELAQRWKQRGISVFSLHPGNMVSSDLSRNYWFYRLLFAIVRPFTKSLQQAAATSIYCATANELTGLSGLYFNNCFFCEPSKLSKSAALQQQLWKLSENLIAELVEQEQH.

The disordered stretch occupies residues 1-23 (MIALPDTDSEDELPPGWEERATD). 2 consecutive WW domains span residues 11–44 (DELP…HPRT) and 52–86 (GELP…DPRL). 128–134 (GANCGIG) is a binding site for NADP(+). S257 is a binding site for substrate. Y288 acts as the Proton acceptor in catalysis.

This sequence belongs to the short-chain dehydrogenases/reductases (SDR) family.

Its subcellular location is the cytoplasm. The protein localises to the mitochondrion. It is found in the golgi apparatus. The protein resides in the lysosome. Functionally, putative oxidoreductase. May control genotoxic stress-induced cell death. May play a role in TGFB1 signaling and TGFB1-mediated cell death. May also play a role in tumor necrosis factor (TNF)-mediated cell death. May play a role in Wnt signaling. The polypeptide is WW domain-containing oxidoreductase (Wwox) (Drosophila melanogaster (Fruit fly)).